Reading from the N-terminus, the 251-residue chain is CDP-diacylglycerol pyrophosphatase (251 aa).

The chain crosses the membrane as a helical span at residues 4–24; the sequence is AGLLFLVMIVIAVVAAGIGYW.

The protein belongs to the Cdh family.

The protein resides in the cell inner membrane. It catalyses the reaction a CDP-1,2-diacyl-sn-glycerol + H2O = a 1,2-diacyl-sn-glycero-3-phosphate + CMP + 2 H(+). It participates in phospholipid metabolism; CDP-diacylglycerol degradation; phosphatidate from CDP-diacylglycerol: step 1/1. In Escherichia coli O9:H4 (strain HS), this protein is CDP-diacylglycerol pyrophosphatase.